Here is a 98-residue protein sequence, read N- to C-terminus: NADH-ubiquinone oxidoreductase chain 4L (98 aa).

3 helical membrane passes run Met1–Ile21, Ser28–Ile48, and Ala59–Val79.

The protein belongs to the complex I subunit 4L family. As to quaternary structure, core subunit of respiratory chain NADH dehydrogenase (Complex I) which is composed of 45 different subunits.

Its subcellular location is the mitochondrion inner membrane. It catalyses the reaction a ubiquinone + NADH + 5 H(+)(in) = a ubiquinol + NAD(+) + 4 H(+)(out). Core subunit of the mitochondrial membrane respiratory chain NADH dehydrogenase (Complex I) which catalyzes electron transfer from NADH through the respiratory chain, using ubiquinone as an electron acceptor. Part of the enzyme membrane arm which is embedded in the lipid bilayer and involved in proton translocation. This chain is NADH-ubiquinone oxidoreductase chain 4L (MT-ND4L), found in Lagorchestes hirsutus (Rufous hare-wallaby).